The following is a 790-amino-acid chain: Exocyst complex component SEC15A (790 aa).

The stretch at 49–70 forms a coiled coil; that stretch reads LVHQLKNVARKKEAEIEDLCKT.

This sequence belongs to the SEC15 family. In terms of assembly, the exocyst complex is composed of SEC3, SEC5, SEC6, SEC8, SEC10, EXO70A1 and EXO84B.

It is found in the cytoplasm. Its subcellular location is the cytosol. In terms of biological role, component of the exocyst complex involved in the docking of exocytic vesicles with fusion sites on the plasma membrane during regulated or polarized secretion. Involved in polarized cell growth and organ morphogenesis. During cytokinesis, involved in cell plate initiation, cell plate maturation and formation of new primary cell wall. This is Exocyst complex component SEC15A (SEC15A) from Arabidopsis thaliana (Mouse-ear cress).